A 170-amino-acid chain; its full sequence is uncharacterized protein (170 aa).

Residues 96-116 (FSAISIGSFPIVLFLSLFFFD) traverse the membrane as a helical segment.

The protein resides in the membrane. This is an uncharacterized protein from Borreliella burgdorferi (strain ATCC 35210 / DSM 4680 / CIP 102532 / B31) (Borrelia burgdorferi).